A 415-amino-acid chain; its full sequence is Corticotropin-releasing factor receptor 1 (415 aa).

Residues 1–23 form the signal peptide; sequence MGQRPQLRLVKALLLLGLNPVST. The Extracellular portion of the chain corresponds to 24–111; sequence SLQDQQCESL…CQEILNEEKK (88 aa). Cystine bridges form between Cys-30–Cys-54, Cys-44–Cys-87, and Cys-68–Cys-102. 5 N-linked (GlcNAc...) asparagine glycosylation sites follow: Asn-38, Asn-45, Asn-78, Asn-90, and Asn-98. The interval 99–108 is important for peptide agonist binding; the sequence is YSECQEILNE. The helical transmembrane segment at 112–142 threads the bilayer; it reads SKVHYHIAVIINYLGHCISLVALLVAFVLFL. The Cytoplasmic portion of the chain corresponds to 143–149; sequence RLRSIRC. Residues 150–174 form a helical membrane-spanning segment; it reads LRNIIHWNLISAFILRNATWFVVQL. The Extracellular segment spans residues 175–189; sequence TVSPEVHQSNVAWCR. A disulfide bridge connects residues Cys-188 and Cys-258. The helical transmembrane segment at 190–218 threads the bilayer; the sequence is LVTAAYNYFHVTNFFWMFGEGCYLHTAIV. The Cytoplasmic portion of the chain corresponds to 219–225; sequence LTYSTDR. Residues 226-253 traverse the membrane as a helical segment; it reads LRKWMFVCIGWGVPFPIIVAWAIGKLYY. Residues 254–269 are Extracellular-facing; it reads DNEKCWFGKRPGVYTD. The helical transmembrane segment at 270–295 threads the bilayer; it reads YIYQGPMILVLLINFIFLFNIVRILM. Residues 280–290 are important for antagonist binding; it reads LLINFIFLFNI. Residues 296 to 306 lie on the Cytoplasmic side of the membrane; that stretch reads TKLRASTTSET. Ser-301 carries the phosphoserine; by PKA modification. Residues 307–331 form a helical membrane-spanning segment; the sequence is IQYRKAVKATLVLLPLLGITYMLFF. The Extracellular portion of the chain corresponds to 332-338; sequence VNPGEDE. A helical transmembrane segment spans residues 339–368; that stretch reads VSRVVFIYFNSFLESFQGFFVSVFYCFLNS. Over 369 to 415 the chain is Cytoplasmic; it reads EVRSAIRKRWRRWQDKHSIRARVARAMSIPTSPTRVSFHSIKQSTAV.

This sequence belongs to the G-protein coupled receptor 2 family. As to quaternary structure, heterodimer; heterodimerizes with GPER1. Interacts (via N-terminal extracellular domain) with CRH and UCN. Interacts with DLG1; this inhibits endocytosis of CRHR1 after agonist binding. In terms of processing, C-terminal Ser or Thr residues may be phosphorylated. Post-translationally, phosphorylation at Ser-301 by PKA prevents maximal coupling to Gq-protein, and thereby negatively regulates downstream signaling. Detected in brain cortex (at protein level).

It localises to the cell membrane. The protein localises to the endosome. Functionally, G-protein coupled receptor for CRH (corticotropin-releasing factor) and UCN (urocortin). Has high affinity for CRH and UCN. Ligand binding causes a conformation change that triggers signaling via guanine nucleotide-binding proteins (G proteins) and down-stream effectors, such as adenylate cyclase. Promotes the activation of adenylate cyclase, leading to increased intracellular cAMP levels. Inhibits the activity of the calcium channel CACNA1H. Required for normal embryonic development of the adrenal gland and for normal hormonal responses to stress. Plays a role in the response to anxiogenic stimuli. The sequence is that of Corticotropin-releasing factor receptor 1 (Crhr1) from Mus musculus (Mouse).